We begin with the raw amino-acid sequence, 179 residues long: Calcineurin subunit B type 2 (179 aa).

Glycine 2 is lipidated: N-myristoyl glycine. EF-hand domains lie at 18-53 (EEIR…QQNP), 57-85 (RVID…FSVK), 87-122 (DEEQ…MVGN), and 128-163 (QLQQ…MEIH). Residues aspartate 31, aspartate 33, serine 35, serine 37, glutamate 42, aspartate 63, aspartate 65, asparagine 67, glutamate 69, glutamate 74, aspartate 100, aspartate 102, aspartate 104, and glutamate 111 each contribute to the Ca(2+) site. Positions 131-136 (QLVDKS) are calcineurin A binding. Aspartate 141, aspartate 143, aspartate 145, arginine 147, and glutamate 152 together coordinate Ca(2+).

This sequence belongs to the calcineurin regulatory subunit family. Forms a complex composed of a calmodulin-dependent catalytic subunit (also known as calcineurin A) and a regulatory Ca(2+)-binding subunit (also known as calcineurin B). There are three catalytic subunits, each encoded by a separate gene (PPP3CA, PPP3CB, and PPP3CC) and two regulatory subunits which are also encoded by separate genes (PPP3R1 and PPP3R2). Interacts with SPATA33 (via PQIIIT motif). In terms of tissue distribution, expressed in osteoblasts and bone marrow (at protein level). Expressed in the testis. Expressed in the sperm midpiece in a SPATA33-dependent manner (at protein level).

The protein localises to the mitochondrion. Its function is as follows. Regulatory subunit of calcineurin, a calcium-dependent, calmodulin stimulated protein phosphatase. Confers calcium sensitivity. This is Calcineurin subunit B type 2 (Ppp3r2) from Mus musculus (Mouse).